A 538-amino-acid chain; its full sequence is Phosphoenolpyruvate carboxykinase (ATP) (538 aa).

3 residues coordinate substrate: R64, Y205, and K211. ATP is bound by residues K211, H230, and 246 to 254 (GLSGTGKTT). Residues K211 and H230 each contribute to the Mn(2+) site. D267 is a Mn(2+) binding site. Residues E295, R331, 447–448 (RI), and T453 each bind ATP. Position 331 (R331) interacts with substrate.

It belongs to the phosphoenolpyruvate carboxykinase (ATP) family. In terms of assembly, monomer. It depends on Mn(2+) as a cofactor.

The protein resides in the cytoplasm. The catalysed reaction is oxaloacetate + ATP = phosphoenolpyruvate + ADP + CO2. It functions in the pathway carbohydrate biosynthesis; gluconeogenesis. In terms of biological role, involved in the gluconeogenesis. Catalyzes the conversion of oxaloacetate (OAA) to phosphoenolpyruvate (PEP) through direct phosphoryl transfer between the nucleoside triphosphate and OAA. The sequence is that of Phosphoenolpyruvate carboxykinase (ATP) from Histophilus somni (strain 129Pt) (Haemophilus somnus).